A 227-amino-acid polypeptide reads, in one-letter code: 7-cyano-7-deazaguanine synthase (227 aa).

7 to 17 (LSGGMDSLVTT) serves as a coordination point for ATP. Zn(2+)-binding residues include C187, C195, C198, and C201.

Belongs to the QueC family. Zn(2+) serves as cofactor.

The catalysed reaction is 7-carboxy-7-deazaguanine + NH4(+) + ATP = 7-cyano-7-deazaguanine + ADP + phosphate + H2O + H(+). It participates in purine metabolism; 7-cyano-7-deazaguanine biosynthesis. Catalyzes the ATP-dependent conversion of 7-carboxy-7-deazaguanine (CDG) to 7-cyano-7-deazaguanine (preQ(0)). This is 7-cyano-7-deazaguanine synthase from Chlorobium phaeovibrioides (strain DSM 265 / 1930) (Prosthecochloris vibrioformis (strain DSM 265)).